The sequence spans 171 residues: Interleukin-26 (171 aa).

The N-terminal stretch at 1 to 21 is a signal peptide; that stretch reads MLVNFILRCGLLLVTLSLAIA.

Belongs to the IL-10 family. In terms of assembly, homodimer. In terms of tissue distribution, expressed in HVS transformed T-cells but not other T-cell lines or primary stimulated T-cells. Expressed in colonic T-cells including Th17 inflammatory T-cells; the expression is significantly increased in serum of patients with Crohn's disease (at protein level).

It is found in the secreted. In terms of biological role, may play a role in local mechanisms of mucosal immunity and seems to have a pro-inflammatory function. May play a role in inflammatory bowel disease. Activates STAT1 and STAT3, MAPK1/3 (ERK1/2), JUN and AKT. Induces expression of SOCS3, TNF-alpha and IL-8, secretion of IL-8 and IL-10 and surface expression of ICAM1. Decreases proliferation of intestinal epithelial cells. Is inhibited by heparin. This is Interleukin-26 (IL26) from Homo sapiens (Human).